The following is a 309-amino-acid chain: Tyrosine recombinase XerD (309 aa).

The Core-binding (CB) domain maps to 3–88; sequence MRASLAIENF…ALRQFFRFLY (86 aa). The 194-residue stretch at 109–302 folds into the Tyr recombinase domain; the sequence is PLPKIMSVEN…LEERLHKLVS (194 aa). Residues Arg158, Lys182, His254, Arg257, and His280 contribute to the active site. Tyr289 serves as the catalytic O-(3'-phospho-DNA)-tyrosine intermediate.

Belongs to the 'phage' integrase family. XerD subfamily. Forms a cyclic heterotetrameric complex composed of two molecules of XerC and two molecules of XerD.

It is found in the cytoplasm. Functionally, site-specific tyrosine recombinase, which acts by catalyzing the cutting and rejoining of the recombining DNA molecules. The XerC-XerD complex is essential to convert dimers of the bacterial chromosome into monomers to permit their segregation at cell division. It also contributes to the segregational stability of plasmids. In Brucella melitensis biotype 1 (strain ATCC 23456 / CCUG 17765 / NCTC 10094 / 16M), this protein is Tyrosine recombinase XerD.